The chain runs to 153 residues: Salivary C-type lectin 1 (153 aa).

The N-terminal stretch at 1–19 (MIFSLYLIVAISLADLTAA) is a signal peptide. Residues 26 to 151 (KNRFCFPNVV…CSSTRRFVCE (126 aa)) enclose the C-type lectin domain. 2 disulfides stabilise this stretch: C45–C150 and C122–C142.

It depends on Ca(2+) as a cofactor. Expressed in female salivary gland. Not detected or low-level expression in female midgut and fat body.

Its subcellular location is the secreted. In terms of biological role, salivary protein with carbohydrate-binding activity; exibits high affinity for D-mannose. Agglutinates host erythrocytes. Probably participates in mosquito innate immune responses to prevent microorganism multiplication in sugar and blood meals. Functionally, (Microbial infection) Agglutinates Staphylococcus aureus in vitro. (Microbial infection) Agglutinates Candida albicans in vitro. Its function is as follows. (Microbial infection) Does not agglutinate Escherichia coli in vitro. In Aedes albopictus (Asian tiger mosquito), this protein is Salivary C-type lectin 1.